Reading from the N-terminus, the 422-residue chain is MEGHKAEEEVLDILRLNVGGCIYTARRESLCRFKDSMLASMFSGRFPLKTDESGACVIDRDGHLFKYLLDYLHGEVHIPTEEQTRVALQEEADYFGIPYPYSLSDHLANEMETYSLRSNIELKKALTDFCDSYGLVCNKPTVWVLHYLNTSGASCESRIIGVYSTKTDGTDAIDKQLGGRIHSKSIFKREAGNNVQYIWSDYSVAELKKMMDAFDAWEGKGVSYWRVPHELIECWTLEERPLLGSLSHMAPIRKRRLIVNEEEEEGVNCKTGPKPVRFLGPSTSTQIKVKNSASIRVSPASAPQPWPRATANLAAGGRAVQRSAQSKVPTPVGTGLPEHPQAAQGPGAPENGATHLPPAKVLLSDKTATPHRVIKLRRTPLCATGSSLPACTTPRPAGPPEPPPDALSPLGTWTENGQDQTK.

A BTB domain is found at 12–80 (DILRLNVGGC…YLHGEVHIPT (69 aa)). Disordered regions lie at residues 289-357 (VKNS…THLP) and 376-422 (LRRT…DQTK). Residues 396-406 (PAGPPEPPPDA) are compositionally biased toward pro residues. A compositionally biased stretch (polar residues) spans 413–422 (WTENGQDQTK).

The polypeptide is BTB/POZ domain-containing protein KCTD18 (KCTD18) (Bos taurus (Bovine)).